Here is a 103-residue protein sequence, read N- to C-terminus: Antitoxin VapB1 (103 aa).

Functionally, antitoxin component of a type II toxin-antitoxin (TA) system. Upon expression in E.coli neutralizes the effect of cognate toxin VapC1, partially inhibits the RNase activity of VapC1 in vitro. The chain is Antitoxin VapB1 (vapB1) from Rickettsia felis (strain ATCC VR-1525 / URRWXCal2) (Rickettsia azadi).